A 62-amino-acid chain; its full sequence is Beta-defensin 133 (62 aa).

A signal peptide spans 1-21 (MKIHIFLFVLFFFLVPIATRG). 2 disulfide bridges follow: cysteine 32-cysteine 60 and cysteine 39-cysteine 53.

It belongs to the beta-defensin family.

It is found in the secreted. Its function is as follows. Has antibacterial activity. This chain is Beta-defensin 133 (DEFB133), found in Pan troglodytes (Chimpanzee).